The following is a 350-amino-acid chain: 2-oxoglutarate-dependent ethylene/succinate-forming enzyme (350 aa).

In terms of domain architecture, Fe2OG dioxygenase spans 166 to 286 (GWHHMRVLRF…RFACAYFHEP (121 aa)). Fe cation-binding residues include histidine 189 and histidine 268.

This sequence belongs to the iron/ascorbate-dependent oxidoreductase family. Monomer. Fe(2+) serves as cofactor.

It catalyses the reaction 2-oxoglutarate + O2 + 2 H(+) = ethene + 3 CO2 + H2O. The enzyme catalyses L-arginine + 2-oxoglutarate + O2 = guanidine + L-glutamate 5-semialdehyde + succinate + CO2. It participates in alkene biosynthesis; ethylene biosynthesis via 2-oxoglutarate. Simultaneously catalyzes two reactions, namely formation of ethylene and of succinate from 2-oxoglutarate. This is 2-oxoglutarate-dependent ethylene/succinate-forming enzyme (efe) from Pseudomonas amygdali pv. sesami (Pseudomonas syringae pv. sesami).